The sequence spans 403 residues: Renin (403 aa).

The N-terminal stretch at 1 to 22 is a signal peptide; it reads MARCRMPRWGLLLVLWGSCTFG. Positions 23–65 are cleaved as a propeptide — activation peptide; it reads LPADTGAFRRIFLKKMPSIRESLKERGVDVAGLGAEWNQFTKR. An N-linked (GlcNAc...) asparagine glycan is attached at Asn70. A Peptidase A1 domain is found at 85 to 400; it reads YYGEIGIGTP…DRHNNRIGFA (316 aa). Residue Asp103 is part of the active site. Cys116 and Cys123 are oxidised to a cystine. N-linked (GlcNAc...) asparagine glycosylation is present at Asn140. A disulfide bridge connects residues Cys279 and Cys283. Residue Asp288 is part of the active site. A disulfide bridge links Cys322 with Cys359.

This sequence belongs to the peptidase A1 family. Interacts with ATP6AP2.

It localises to the secreted. It is found in the membrane. The catalysed reaction is Cleavage of Leu-|-Xaa bond in angiotensinogen to generate angiotensin I.. With respect to regulation, interaction with ATP6AP2 results in a 5-fold increased efficiency in angiotensinogen processing. In terms of biological role, renin is a highly specific endopeptidase, whose only known function is to generate angiotensin I from angiotensinogen in the plasma, initiating a cascade of reactions that produce an elevation of blood pressure and increased sodium retention by the kidney. The protein is Renin (REN) of Canis lupus familiaris (Dog).